Here is a 423-residue protein sequence, read N- to C-terminus: Ferrochelatase, mitochondrial (423 aa).

A mitochondrion-targeting transit peptide spans 1–54; that stretch reads MRSLGANMAAALRAAGVLLRDPLASSSWRVCQPWRWKSGAAAAAVTTETAQHAQ. K57 bears the N6-acetyllysine mark. The protoporphyrin IX site is built by R115, Y123, and S130. The residue at position 138 (K138) is an N6-succinyllysine. C196 contacts [2Fe-2S] cluster. Residues H230 and D383 contribute to the active site. C403, C406, and C411 together coordinate [2Fe-2S] cluster. K415 is modified (N6-acetyllysine; alternate). K415 bears the N6-succinyllysine; alternate mark.

Belongs to the ferrochelatase family. In terms of assembly, homodimer. Homotetramer. Interacts with PGRMC1; the interaction results in decreased FECH activity. Interacts with ABCB10 and SLC25A37; this interaction forms an oligomeric complex. Forms a complex with ABCB7 and ABCB10, where a dimeric FECH bridges ABCB7 and ABCB10 homodimers; this complex may be required for cellular iron homeostasis, mitochondrial function and heme biosynthesis. Interacts with ABCB7 and ABCB10. It depends on [2Fe-2S] cluster as a cofactor.

The protein resides in the mitochondrion inner membrane. The catalysed reaction is heme b + 2 H(+) = protoporphyrin IX + Fe(2+). Its pathway is porphyrin-containing compound metabolism; protoheme biosynthesis; protoheme from protoporphyrin-IX: step 1/1. Its activity is regulated as follows. Inhibited by nitric oxide (NO). The 2Fe-2S cluster could act as a NO sensor. Its function is as follows. Catalyzes the ferrous insertion into protoporphyrin IX and participates in the terminal step in the heme biosynthetic pathway. The sequence is that of Ferrochelatase, mitochondrial from Homo sapiens (Human).